We begin with the raw amino-acid sequence, 137 residues long: Large ribosomal subunit protein uL16 (137 aa).

It belongs to the universal ribosomal protein uL16 family. As to quaternary structure, part of the 50S ribosomal subunit.

Binds 23S rRNA and is also seen to make contacts with the A and possibly P site tRNAs. This chain is Large ribosomal subunit protein uL16, found in Alkalilimnicola ehrlichii (strain ATCC BAA-1101 / DSM 17681 / MLHE-1).